The primary structure comprises 178 residues: ATP-dependent protease subunit HslV (178 aa).

Thr-7 is an active-site residue. Residues Gly-162, Cys-165, and Thr-168 each contribute to the Na(+) site.

It belongs to the peptidase T1B family. HslV subfamily. A double ring-shaped homohexamer of HslV is capped on each side by a ring-shaped HslU homohexamer. The assembly of the HslU/HslV complex is dependent on binding of ATP.

It localises to the cytoplasm. It catalyses the reaction ATP-dependent cleavage of peptide bonds with broad specificity.. Its activity is regulated as follows. Allosterically activated by HslU binding. Functionally, protease subunit of a proteasome-like degradation complex believed to be a general protein degrading machinery. This is ATP-dependent protease subunit HslV from Cupriavidus metallidurans (strain ATCC 43123 / DSM 2839 / NBRC 102507 / CH34) (Ralstonia metallidurans).